A 552-amino-acid chain; its full sequence is Terpene synthase 5 (552 aa).

The Mg(2+) site is built by Asp-307, Asp-311, and Glu-457. Positions 307–311 (DDTYD) match the DDXXD motif motif.

Belongs to the terpene synthase family. Requires Mg(2+) as cofactor.

Functionally, catalyzes the cyclization of farnesyl diphosphate to multiple sesquiterpenes, such as olefins and sesquiterpene alcohols. The chain is Terpene synthase 5 (TPS5) from Ricinus communis (Castor bean).